The chain runs to 495 residues: MKLAPAFPRSYFMGRFWAGNTTGDGLEQTWLDGYYRYTKRGKVFARKTELNNWSLIFPSELSHDWRNLPLDQISFQHWAQEGGKIKHHTVLTKAHSKVALLFAKKELLLAVQKILVKETLSLLPGIIGDKWVSLDLMQVCSDLVIKLNARILYGPAYADDQDFHKRLITFANGVDGINSIYFTWPRSLWKIVSLVHPTIRGFYANLPHLKKRMLPDIRSRIAKLQAKAAQGEGKVPASDEDVTFMTALIKMHMEEGTLGEQDSDLEKVCMEAVFYTYEFWGPIMPTLFFMLMAIGKNPGYLQALREEISSALESNDWSSDFLARTPKLESFIREVLRLYVPAQWLITDIHRASLATVSRRTEKPIYVQSMDMHIPAGVNLCVPAKYIHRDPDFYPNPTTFDGFRFYDPVTNNVTIRATTATDTYLSFSHGSGLCPGRVFGAHVVQVLCAVFIMEYDVKVDPSKTFPDVQSTKEGRGDGMVGTTDILIRKRTSAKV.

C434 serves as a coordination point for heme.

The protein belongs to the cytochrome P450 family. Heme is required as a cofactor.

It participates in alkaloid biosynthesis. Cytochrome P450 monooxygenase; part of the gene cluster that mediates the biosynthesis of communesins, a prominent class of indole alkaloids with great potential as pharmaceuticals. Communesins are biosynthesized by the coupling of tryptamine and aurantioclavine, two building blocks derived from L-tryptophan. The L-tryptophan decarboxylase cnsB converts L-tryptophan to tryptamine, whereas the tryptophan dimethylallyltransferase cnsF converts L-tryptophan to 4-dimethylallyl tryptophan which is further transformed to aurantioclavine by the aurantioclavine synthase cnsA, probably aided by the catalase cnsD. The cytochrome P450 monooxygenase cnsC catalyzes the heterodimeric coupling between the two different indole moieties, tryptamine and aurantioclavine, to construct vicinal quaternary stereocenters and yield the heptacyclic communesin scaffold. The O-methyltransferase cnsE then methylates the communesin scaffold to produce communesin K, the simplest characterized communesin that contains the heptacyclic core. The dioxygenase cnsJ converts communesin K into communesin I. Acylation to introduce the hexadienyl group at position N16 of communesin I by the acyltransferase cnsK leads to the production of communesin B. The hexadienyl group is produced by the highly reducing polyketide synthase cnsI, before being hydrolytically removed from cnsI by the serine hydrolase cnsH, converted into hexadienyl-CoA by the CoA ligase cnsG, and then transferred to communesin I by cnsK. Surprisingly, cnsK may also be a promiscuous acyltransferase that can tolerate a range of acyl groups, including acetyl-, propionyl-, and butyryl-CoA, which lead to communesins A, G and H respectively. The roles of the alpha-ketoglutarate-dependent dioxygenases cnsM and cnsP have still to be determined. This Penicillium expansum (Blue mold rot fungus) protein is Cytochrome P450 monooxygenase cnsC.